The primary structure comprises 274 residues: Transmembrane O-methyltransferase (274 aa).

Residues 14–34 (VGTMSPAIALAFLPLVVTLLV) traverse the membrane as a helical segment. S-adenosyl-L-methionine-binding positions include Glu-120, 122 to 123 (GT), Ser-128, Glu-146, and Ser-176.

Belongs to the class I-like SAM-binding methyltransferase superfamily. Cation-dependent O-methyltransferase family. As to quaternary structure, interacts with LHFPL5, PCDH15, TMC1, TMC2 and TMIE. Interacts directly with TMC1. The interaction of TOMT with TMC1 and TMC2 is required for the transportation of TMC1/2 into the stereocilia of hair cells.

It localises to the membrane. It is found in the cytoplasm. The protein resides in the endoplasmic reticulum. It carries out the reaction a catechol + S-adenosyl-L-methionine = a guaiacol + S-adenosyl-L-homocysteine + H(+). Catalyzes the O-methylation, and thereby the inactivation, of catecholamine neurotransmitters and catechol hormones. Required for auditory function. Component of the cochlear hair cell's mechanotransduction (MET) machinery. Involved in the assembly of the asymmetric tip-link MET complex. Required for transportation of TMC1 and TMC2 proteins into the mechanically sensitive stereocilia of the hair cells. The function in MET is independent of the enzymatic activity. In Propithecus coquereli (Coquerel's sifaka), this protein is Transmembrane O-methyltransferase.